Consider the following 785-residue polypeptide: 1-phosphatidylinositol 4,5-bisphosphate phosphodiesterase delta-3 (785 aa).

A disordered region spans residues 1–43 (MLCGGWKRSRRSPEESRVSAQVAAPLAFPPSPASSDSSTKRPG). In terms of domain architecture, PH spans 65–168 (SRLLKIRSRT…WVRGLAKLRA (104 aa)). The tract at residues 69-97 (KIRSRTWHKERLYRLQEDGLSVWFQRRIP) is substrate binding. Ser101 is modified (phosphoserine). 3 consecutive EF-hand domains span residues 178–213 (RLDHWIHSYLHRADSDQDSKMSFKEIKSLLRMVNVD), 214–249 (MNDMYAYRLFKECDHSNNERLEGAEIEAFLRRLLKR), and 246–281 (LLKRPELEEIFRRYSGEDRVLSASELLEFLEDQGED). Ca(2+) contacts are provided by Asp191, Asp193, Asp195, Lys197, Glu202, Asp227, Ser229, Asn231, Arg233, and Glu238. One can recognise a PI-PLC X-box domain in the interval 333 to 478 (QDMGQPLAHY…LKGRILVKGK (146 aa)). His348 is an active-site residue. Ca(2+) contacts are provided by Asn349, Glu378, and Asp380. His393 is an active-site residue. Glu427 lines the Ca(2+) pocket. The substrate site is built by Lys476 and Lys478. Residues 484–493 (RSEDGRILSD) are compositionally biased toward basic and acidic residues. Residues 484-517 (RSEDGRILSDREEEEEEEEEAEEALEAAEQRSRA) are disordered. Ser492 is modified (phosphoserine). Over residues 494 to 509 (REEEEEEEEEAEEALE) the composition is skewed to acidic residues. Residues 524-640 (LSALAVYCCA…GYVLKPAYLR (117 aa)) form the PI-PLC Y-box domain. Ser553 is a substrate binding site. Ser569 is modified (phosphoserine). Substrate is bound at residue Arg580. One can recognise a C2 domain in the interval 636–765 (PAYLRQLNTT…QGYRHIHLLS (130 aa)). The Ca(2+) site is built by Ile679, Asp681, Asn705, Asp734, Tyr735, and Asp736.

Requires Ca(2+) as cofactor. As to expression, expressed in cerebellum and cerebral cortex.

The protein resides in the membrane. It is found in the cytoplasm. It localises to the cleavage furrow. It catalyses the reaction a 1,2-diacyl-sn-glycero-3-phospho-(1D-myo-inositol-4,5-bisphosphate) + H2O = 1D-myo-inositol 1,4,5-trisphosphate + a 1,2-diacyl-sn-glycerol + H(+). With respect to regulation, strongly activated by phosphatidic acid. Inhibited by phosphatidylethanolamine (PtdEtn), phosphatidylcholine (PtdCho), sphingomyelin and phosphatidylserine (PtdSer). In terms of biological role, hydrolyzes the phosphatidylinositol 4,5-bisphosphate (PIP2) to generate 2 second messenger molecules diacylglycerol (DAG) and inositol 1,4,5-trisphosphate (IP3). DAG mediates the activation of protein kinase C (PKC), while IP3 releases Ca(2+) from intracellular stores. Essential for trophoblast and placental development. May participate in cytokinesis by hydrolyzing PIP2 at the cleavage furrow. Regulates neurite outgrowth through the inhibition of RhoA/Rho kinase signaling. In Mus musculus (Mouse), this protein is 1-phosphatidylinositol 4,5-bisphosphate phosphodiesterase delta-3.